The following is a 267-amino-acid chain: MNDSKPLYRPQFFYTTGASPCPYLDGRMERKVVTEITGPDAETLHNRLSRAGFRRSHNIAYAPVCQGCNACVPIRIAVNDFRLTRTRRRINRTNAGVEMFDVPAQATHEQFMLFQRYQKSRHGDGDMAAMGFTDYRAMVEDTPIQTSILEFRDQDDVLLCACLTDRLNDGLSAVYSFYDPDLPQRSLGSYAILSMVAQTKAEGLPYLYLGYWVANSRKMAYKSAYQPAEILSRGAWRPLTQADIEEQEEQTRPLFRPSATGFSTGQE.

A disordered region spans residues 246–267; the sequence is EQEEQTRPLFRPSATGFSTGQE.

The protein belongs to the R-transferase family. Bpt subfamily.

It is found in the cytoplasm. It carries out the reaction N-terminal L-glutamyl-[protein] + L-leucyl-tRNA(Leu) = N-terminal L-leucyl-L-glutamyl-[protein] + tRNA(Leu) + H(+). The enzyme catalyses N-terminal L-aspartyl-[protein] + L-leucyl-tRNA(Leu) = N-terminal L-leucyl-L-aspartyl-[protein] + tRNA(Leu) + H(+). Functions in the N-end rule pathway of protein degradation where it conjugates Leu from its aminoacyl-tRNA to the N-termini of proteins containing an N-terminal aspartate or glutamate. This Granulibacter bethesdensis (strain ATCC BAA-1260 / CGDNIH1) protein is Aspartate/glutamate leucyltransferase.